A 227-amino-acid polypeptide reads, in one-letter code: MKPPIIIINFKAYENSFGDKAVNLGKKIEKISKEYSVEIILSTPATMIYRMSQEVDLPIYAEHVDPVPLGAFTGAILPEMVKDAGAKGTLINHSERRLRADEIDDVLKRTKKLGLKSILCVDRYELVYPFSLLKPDAILIEPPELIGTGVSVSKAKPEVITRAVDEIRKSEGIYLIAGAGITTGEDVYKALKLGAHGIGVASAVMKAKEPEKVVEDFITSALRAISS.

9–11 (NFK) lines the substrate pocket. Catalysis depends on H93, which acts as the Electrophile. E141 (proton acceptor) is an active-site residue. Residues I146, G180, and 201–202 (AS) each bind substrate.

The protein belongs to the triosephosphate isomerase family. As to quaternary structure, homotetramer; dimer of dimers.

The protein localises to the cytoplasm. The enzyme catalyses D-glyceraldehyde 3-phosphate = dihydroxyacetone phosphate. It participates in carbohydrate biosynthesis; gluconeogenesis. It functions in the pathway carbohydrate degradation; glycolysis; D-glyceraldehyde 3-phosphate from glycerone phosphate: step 1/1. Involved in the gluconeogenesis. Catalyzes stereospecifically the conversion of dihydroxyacetone phosphate (DHAP) to D-glyceraldehyde-3-phosphate (G3P). This Saccharolobus solfataricus (strain ATCC 35092 / DSM 1617 / JCM 11322 / P2) (Sulfolobus solfataricus) protein is Triosephosphate isomerase.